We begin with the raw amino-acid sequence, 123 residues long: Ribosome-binding factor A (123 aa).

Belongs to the RbfA family. Monomer. Binds 30S ribosomal subunits, but not 50S ribosomal subunits or 70S ribosomes.

The protein localises to the cytoplasm. One of several proteins that assist in the late maturation steps of the functional core of the 30S ribosomal subunit. Associates with free 30S ribosomal subunits (but not with 30S subunits that are part of 70S ribosomes or polysomes). Required for efficient processing of 16S rRNA. May interact with the 5'-terminal helix region of 16S rRNA. This Neisseria meningitidis serogroup C (strain 053442) protein is Ribosome-binding factor A.